Consider the following 207-residue polypeptide: 2,3-bisphosphoglycerate-dependent phosphoglycerate mutase (207 aa).

Substrate contacts are provided by residues 10-17 (RHGQSEWN), 23-24 (TG), Arg62, 89-92 (ERDY), Lys100, 116-117 (RR), and 160-161 (GN). His11 serves as the catalytic Tele-phosphohistidine intermediate. The active-site Proton donor/acceptor is Glu89.

The protein belongs to the phosphoglycerate mutase family. BPG-dependent PGAM subfamily. As to quaternary structure, homodimer.

The catalysed reaction is (2R)-2-phosphoglycerate = (2R)-3-phosphoglycerate. The protein operates within carbohydrate degradation; glycolysis; pyruvate from D-glyceraldehyde 3-phosphate: step 3/5. In terms of biological role, catalyzes the interconversion of 2-phosphoglycerate and 3-phosphoglycerate. The protein is 2,3-bisphosphoglycerate-dependent phosphoglycerate mutase of Bradyrhizobium sp. (strain BTAi1 / ATCC BAA-1182).